A 218-amino-acid polypeptide reads, in one-letter code: Glutathione S-transferase A (218 aa).

The residue at position 1 (Ser-1) is an N-acetylserine. The region spanning 2–82 is the GST N-terminal domain; it reads GKPVLHYFNV…YIATKYNLYG (81 aa). Lys-3 is subject to N6-succinyllysine. Residues Tyr-8, Lys-44, 53–54, and 66–67 each bind glutathione; these read QV and QS. The GST C-terminal domain occupies 84 to 206; that stretch reads DTKERLLIDM…LQPGSQRKPF (123 aa).

This sequence belongs to the GST superfamily. Alpha family. As to quaternary structure, homodimer or heterodimer of GSTA1 and GSTA2.

The protein resides in the cytoplasm. The catalysed reaction is RX + glutathione = an S-substituted glutathione + a halide anion + H(+). It catalyses the reaction prostaglandin A2 + glutathione = prostaglandin A2-S-(R)-glutathione. It carries out the reaction prostaglandin J2 + glutathione = prostaglandin J2-S-(R)-glutathione. The enzyme catalyses (13S)-hydroperoxy-(9Z,11E)-octadecadienoate + 2 glutathione = (13S)-hydroxy-(9Z,11E)-octadecadienoate + glutathione disulfide + H2O. The catalysed reaction is androst-5-ene-3,17-dione = androst-4-ene-3,17-dione. Glutathione S-transferase that catalyzes the nucleophilic attack of the sulfur atom of glutathione on the electrophilic groups of a wide range of exogenous and endogenous compounds. Involved in the formation of glutathione conjugates of both prostaglandin A2 (PGA2) and prostaglandin J2 (PGJ2). It also catalyzes the isomerization of D5-androstene-3,17-dione (AD) into D4-androstene-3,17-dione and may therefore play an important role in hormone biosynthesis. Through its glutathione-dependent peroxidase activity toward the fatty acid hydroperoxide (13S)-hydroperoxy-(9Z,11E)-octadecadienoate/13-HPODE it is also involved in the metabolism of oxidized linoleic acid. In Cavia porcellus (Guinea pig), this protein is Glutathione S-transferase A.